The following is a 456-amino-acid chain: Bifunctional protein GlmU (456 aa).

A pyrophosphorylase region spans residues 1–229 (MLNNAMSVVI…LSEVEGVNNR (229 aa)). UDP-N-acetyl-alpha-D-glucosamine contacts are provided by residues 11-14 (LAAG), Lys-25, Gln-76, 81-82 (GT), 103-105 (YGD), Gly-140, Glu-154, Asn-169, and Asn-227. A Mg(2+)-binding site is contributed by Asp-105. Residue Asn-227 participates in Mg(2+) binding. The linker stretch occupies residues 230–250 (LQLSRLERVYQSEQAEKLLLA). Residues 251 to 456 (GVMLRDPARF…EGWRRPVKKK (206 aa)) are N-acetyltransferase. Positions 333 and 351 each coordinate UDP-N-acetyl-alpha-D-glucosamine. His-363 acts as the Proton acceptor in catalysis. Positions 366 and 377 each coordinate UDP-N-acetyl-alpha-D-glucosamine. Acetyl-CoA contacts are provided by residues Ala-380, 386–387 (NY), Ser-405, Ala-423, and Arg-440.

The protein in the N-terminal section; belongs to the N-acetylglucosamine-1-phosphate uridyltransferase family. In the C-terminal section; belongs to the transferase hexapeptide repeat family. As to quaternary structure, homotrimer. Mg(2+) is required as a cofactor.

The protein localises to the cytoplasm. The enzyme catalyses alpha-D-glucosamine 1-phosphate + acetyl-CoA = N-acetyl-alpha-D-glucosamine 1-phosphate + CoA + H(+). The catalysed reaction is N-acetyl-alpha-D-glucosamine 1-phosphate + UTP + H(+) = UDP-N-acetyl-alpha-D-glucosamine + diphosphate. The protein operates within nucleotide-sugar biosynthesis; UDP-N-acetyl-alpha-D-glucosamine biosynthesis; N-acetyl-alpha-D-glucosamine 1-phosphate from alpha-D-glucosamine 6-phosphate (route II): step 2/2. It functions in the pathway nucleotide-sugar biosynthesis; UDP-N-acetyl-alpha-D-glucosamine biosynthesis; UDP-N-acetyl-alpha-D-glucosamine from N-acetyl-alpha-D-glucosamine 1-phosphate: step 1/1. It participates in bacterial outer membrane biogenesis; LPS lipid A biosynthesis. In terms of biological role, catalyzes the last two sequential reactions in the de novo biosynthetic pathway for UDP-N-acetylglucosamine (UDP-GlcNAc). The C-terminal domain catalyzes the transfer of acetyl group from acetyl coenzyme A to glucosamine-1-phosphate (GlcN-1-P) to produce N-acetylglucosamine-1-phosphate (GlcNAc-1-P), which is converted into UDP-GlcNAc by the transfer of uridine 5-monophosphate (from uridine 5-triphosphate), a reaction catalyzed by the N-terminal domain. The chain is Bifunctional protein GlmU from Escherichia coli O139:H28 (strain E24377A / ETEC).